The sequence spans 119 residues: E3 ubiquitin-protein ligase PPP1R11 (119 aa).

Residues 1-42 (MAESSGPTAGGGATSSTVTTESDTQPEHRSLTLKLRKRKPDK) are disordered. Atypical RING finger domain regions lie at residues 55–65 (NLGRRSSKCCC) and 87–96 (CESAHCIRGH). Positions 96-119 (HKKATSGSKETPSSHHDKTGSMQH) are disordered. The span at 107–119 (PSSHHDKTGSMQH) shows a compositional bias: basic and acidic residues.

The catalysed reaction is S-ubiquitinyl-[E2 ubiquitin-conjugating enzyme]-L-cysteine + [acceptor protein]-L-lysine = [E2 ubiquitin-conjugating enzyme]-L-cysteine + N(6)-ubiquitinyl-[acceptor protein]-L-lysine.. Its pathway is protein modification; protein ubiquitination. Atypical E3 ubiquitin-protein ligase which ubiquitinates TLR2 at 'Lys-754' leading to its degradation by the proteasome. Inhibitor of protein phosphatase 1. This is E3 ubiquitin-protein ligase PPP1R11 (ppp1r11) from Xenopus tropicalis (Western clawed frog).